The primary structure comprises 309 residues: Aspartate carbamoyltransferase catalytic subunit (309 aa).

Carbamoyl phosphate contacts are provided by arginine 49 and threonine 50. Lysine 77 serves as a coordination point for L-aspartate. Carbamoyl phosphate is bound by residues arginine 99, histidine 127, and glutamine 130. L-aspartate-binding residues include arginine 160 and arginine 211. Carbamoyl phosphate contacts are provided by alanine 252 and proline 253.

Belongs to the aspartate/ornithine carbamoyltransferase superfamily. ATCase family. As to quaternary structure, heterododecamer (2C3:3R2) of six catalytic PyrB chains organized as two trimers (C3), and six regulatory PyrI chains organized as three dimers (R2).

It carries out the reaction carbamoyl phosphate + L-aspartate = N-carbamoyl-L-aspartate + phosphate + H(+). It functions in the pathway pyrimidine metabolism; UMP biosynthesis via de novo pathway; (S)-dihydroorotate from bicarbonate: step 2/3. Functionally, catalyzes the condensation of carbamoyl phosphate and aspartate to form carbamoyl aspartate and inorganic phosphate, the committed step in the de novo pyrimidine nucleotide biosynthesis pathway. This is Aspartate carbamoyltransferase catalytic subunit from Geobacillus sp. (strain WCH70).